A 75-amino-acid chain; its full sequence is MPQSSRYSDEHVEQLLSELVSVLEKHRTPTDLSLMVLGNMVTNLINTSIAPAQRKVLARSFAEALQASVREDKAH.

It belongs to the UPF0352 family.

In Yersinia pseudotuberculosis serotype I (strain IP32953), this protein is UPF0352 protein YPTB1297.